Here is a 170-residue protein sequence, read N- to C-terminus: Adenine phosphoribosyltransferase (170 aa).

Belongs to the purine/pyrimidine phosphoribosyltransferase family. Homodimer.

Its subcellular location is the cytoplasm. The enzyme catalyses AMP + diphosphate = 5-phospho-alpha-D-ribose 1-diphosphate + adenine. The protein operates within purine metabolism; AMP biosynthesis via salvage pathway; AMP from adenine: step 1/1. Its function is as follows. Catalyzes a salvage reaction resulting in the formation of AMP, that is energically less costly than de novo synthesis. The sequence is that of Adenine phosphoribosyltransferase from Nitrosopumilus maritimus (strain SCM1).